The chain runs to 284 residues: MKLMVVSGNSGAGKSVALRVLEDLGYYCVDNLPVDLLAQFVESIQHSSQNVAVSVDIRNLPKDPSLLKNTLTELKKSHDVTVIFLDAEDKELIKRYSETRRLHPLSLIGEQCSLEQAVELEKSILCHFKEDADLVLDTTSKSIHDLSETLRSRILGRESKELVMVFESFGFKHGLPTDADYVFDVRFLPNPHWEPTLRPMTGLDKPVADYLEKHAEVIQLKEQIQHFLMTWLPALEKNNRSYLTVAIGCTGGQHRSVYITQQLGEYFKQQGQQVQIRHKTLERH.

8–15 (GNSGAGKS) serves as a coordination point for ATP. Position 56 to 59 (56 to 59 (DIRN)) interacts with GTP.

Belongs to the RapZ-like family.

Functionally, displays ATPase and GTPase activities. The polypeptide is Nucleotide-binding protein VSAL_I0495 (Aliivibrio salmonicida (strain LFI1238) (Vibrio salmonicida (strain LFI1238))).